A 422-amino-acid chain; its full sequence is F-box/kelch-repeat protein At3g27150 (422 aa).

The F-box domain maps to 68-114 (LLNVPQLVYELEVEILARVPRFEYWKLKLLNKGFSRLLKSDEIFKVR). Kelch repeat units lie at residues 162–212 (ESLC…TCGT), 213–264 (VVFV…YLRG), 266–312 (FYVL…SPPL), 314–361 (AVVG…VAFK), and 366–412 (KLLV…RFNH).

The chain is F-box/kelch-repeat protein At3g27150 from Arabidopsis thaliana (Mouse-ear cress).